The primary structure comprises 371 residues: Putative glutamate--cysteine ligase 2 (371 aa).

This sequence belongs to the glutamate--cysteine ligase type 2 family. YbdK subfamily.

The enzyme catalyses L-cysteine + L-glutamate + ATP = gamma-L-glutamyl-L-cysteine + ADP + phosphate + H(+). Its function is as follows. ATP-dependent carboxylate-amine ligase which exhibits weak glutamate--cysteine ligase activity. This Cupriavidus pinatubonensis (strain JMP 134 / LMG 1197) (Cupriavidus necator (strain JMP 134)) protein is Putative glutamate--cysteine ligase 2.